The sequence spans 58 residues: DNA-directed RNA polymerases I, II, and III subunit RPABC4 (58 aa).

Residues Cys19, Cys22, Cys36, and Cys39 each contribute to the Zn(2+) site. The C4-type zinc finger occupies 19–39; the sequence is CGECHTENEIKSRDPIRCREC.

This sequence belongs to the archaeal Rpo12/eukaryotic RPC10 RNA polymerase subunit family. As to quaternary structure, component of the RNA polymerase I (Pol I), RNA polymerase II (Pol II) and RNA polymerase III (Pol III) complexes consisting of at least 13, 12 and 17 subunits, respectively. Pol I complex consists of a ten-subunit catalytic core composed of POLR1A/RPA1, POLR1B/RPA2, POLR1C/RPAC1, POLR1D/RPAC2, POLR1H/RPA12, POLR2E/RPABC1, POLR2F/RPABC2, POLR2H/RPABC3, POLR2K/RPABC4 and POLR2L/RPABC5; a mobile stalk subunit POLR1F/RPA43 protruding from the core and additional subunits homologous to general transcription factors POLR1E/RPA49 and POLR1G/RPA34. Part of Pol I pre-initiation complex (PIC), in which Pol I core assembles with RRN3 and promoter-bound UTBF and SL1/TIF-IB complex. Pol II complex contains a ten-subunit catalytic core composed of POLR2A/RPB1, POLR2B/RPB2, POLR2C/RPB3, POLR2I/RPB9, POLR2J/RPB11, POLR2E/RPABC1, POLR2F/RPABC2, POLR2H/RPABC3, POLR2K/RPABC4 and POLR2L/RPABC5 and a mobile stalk composed of two subunits POLR2D/RPB4 and POLR2G/RPB7. Part of Pol II(G) complex, in which Pol II core associates with an additional subunit POLR2M; unlike conventional Pol II, Pol II(G) functions as a transcriptional repressor. Part of TBP-based Pol II pre-initiation complex (PIC), in which Pol II core assembles with general transcription factors and other specific initiation factors including GTF2E1, GTF2E2, GTF2F1, GTF2F2, TCEA1, ERCC2, ERCC3, GTF2H2, GTF2H3, GTF2H4, GTF2H5, GTF2A1, GTF2A2, GTF2B and TBP; this large multi-subunit PIC complex mediates DNA unwinding and targets Pol II core to the transcription start site where the first phosphodiester bond forms. Pol III complex consists of a ten-subunit catalytic core composed of POLR3A/RPC1, POLR3B/RPC2, POLR1C/RPAC1, POLR1D/RPAC2, POLR3K/RPC10, POLR2E/RPABC1, POLR2F/RPABC2, POLR2H/RPABC3, POLR2K/RPABC4 and POLR2L/RPABC5; a mobile stalk composed of two subunits POLR3H/RPC8 and CRCP/RPC9, protruding from the core and functioning primarily in transcription initiation; and additional subunits homologous to general transcription factors of the RNA polymerase II machinery, POLR3C/RPC3-POLR3F/RPC6-POLR3G/RPC7 heterotrimer required for transcription initiation and POLR3D/RPC4-POLR3E/RPC5 heterodimer involved in both transcription initiation and termination.

It is found in the nucleus. Its subcellular location is the nucleolus. DNA-dependent RNA polymerase catalyzes the transcription of DNA into RNA using the four ribonucleoside triphosphates as substrates. Common component of RNA polymerases I, II and III which synthesize ribosomal RNA precursors, mRNA precursors and many functional non-coding RNAs, and a small RNAs, such as 5S rRNA and tRNAs, respectively. In Bos taurus (Bovine), this protein is DNA-directed RNA polymerases I, II, and III subunit RPABC4 (POLR2K).